Reading from the N-terminus, the 1358-residue chain is DNA-directed RNA polymerase subunit beta (1358 aa).

The protein belongs to the RNA polymerase beta chain family. The RNAP catalytic core consists of 2 alpha, 1 beta, 1 beta' and 1 omega subunit. When a sigma factor is associated with the core the holoenzyme is formed, which can initiate transcription.

It catalyses the reaction RNA(n) + a ribonucleoside 5'-triphosphate = RNA(n+1) + diphosphate. Its function is as follows. DNA-dependent RNA polymerase catalyzes the transcription of DNA into RNA using the four ribonucleoside triphosphates as substrates. This Francisella philomiragia subsp. philomiragia (strain ATCC 25017 / CCUG 19701 / FSC 153 / O#319-036) protein is DNA-directed RNA polymerase subunit beta.